The following is a 201-amino-acid chain: U1 small nuclear ribonucleoprotein C (201 aa).

The Matrin-type zinc finger occupies 4–36 (YYCEYCDIYLTHSSPVGRRQHNQGRKHISAKIE). Positions 137–154 (IQKPYNNFDNKNNNYNNK) are enriched in low complexity. Residues 137–176 (IQKPYNNFDNKNNNYNNKPITNSSYKNDKQDYRNNNENND) form a disordered region.

It belongs to the U1 small nuclear ribonucleoprotein C family. As to quaternary structure, U1 snRNP is composed of the 7 core Sm proteins B/B', D1, D2, D3, E, F and G that assemble in a heptameric protein ring on the Sm site of the small nuclear RNA to form the core snRNP, and at least 3 U1 snRNP-specific proteins U1-70K, U1-A and U1-C. U1-C interacts with U1 snRNA and the 5' splice-site region of the pre-mRNA.

It is found in the nucleus. Component of the spliceosomal U1 snRNP, which is essential for recognition of the pre-mRNA 5' splice-site and the subsequent assembly of the spliceosome. U1-C is directly involved in initial 5' splice-site recognition for both constitutive and regulated alternative splicing. The interaction with the 5' splice-site seems to precede base-pairing between the pre-mRNA and the U1 snRNA. Stimulates commitment or early (E) complex formation by stabilizing the base pairing of the 5' end of the U1 snRNA and the 5' splice-site region. The chain is U1 small nuclear ribonucleoprotein C from Plasmodium yoelii yoelii.